Consider the following 367-residue polypeptide: 3-dehydroquinate synthase (367 aa).

NAD(+) contacts are provided by residues 99–103 (GVVGD), 123–124 (TT), K136, K145, and 163–166 (FLRT). Zn(2+) contacts are provided by E178, H242, and H259.

This sequence belongs to the sugar phosphate cyclases superfamily. Dehydroquinate synthase family. Requires Co(2+) as cofactor. The cofactor is Zn(2+). NAD(+) serves as cofactor.

The protein resides in the cytoplasm. It carries out the reaction 7-phospho-2-dehydro-3-deoxy-D-arabino-heptonate = 3-dehydroquinate + phosphate. It functions in the pathway metabolic intermediate biosynthesis; chorismate biosynthesis; chorismate from D-erythrose 4-phosphate and phosphoenolpyruvate: step 2/7. Its function is as follows. Catalyzes the conversion of 3-deoxy-D-arabino-heptulosonate 7-phosphate (DAHP) to dehydroquinate (DHQ). This Chlorobaculum parvum (strain DSM 263 / NCIMB 8327) (Chlorobium vibrioforme subsp. thiosulfatophilum) protein is 3-dehydroquinate synthase.